Consider the following 257-residue polypeptide: Zinc import ATP-binding protein ZnuC (257 aa).

Positions 5–220 (ITLKNVAVNF…PEFIAMFGHH (216 aa)) constitute an ABC transporter domain. 37 to 44 (GPNGAGKS) is an ATP binding site.

This sequence belongs to the ABC transporter superfamily. Zinc importer (TC 3.A.1.15.5) family. As to quaternary structure, the complex is composed of two ATP-binding proteins (ZnuC), two transmembrane proteins (ZnuB) and a solute-binding protein (ZnuA).

Its subcellular location is the cell inner membrane. It catalyses the reaction Zn(2+)(out) + ATP(in) + H2O(in) = Zn(2+)(in) + ADP(in) + phosphate(in) + H(+)(in). Part of the ABC transporter complex ZnuABC involved in zinc import. Responsible for energy coupling to the transport system. The chain is Zinc import ATP-binding protein ZnuC from Photorhabdus laumondii subsp. laumondii (strain DSM 15139 / CIP 105565 / TT01) (Photorhabdus luminescens subsp. laumondii).